The primary structure comprises 199 residues: Chorismate pyruvate-lyase (199 aa).

This sequence belongs to the chorismate pyruvate-lyase type 2 family.

It catalyses the reaction chorismate = 4-hydroxybenzoate + pyruvate. Functionally, removes the pyruvyl group from chorismate to provide 4-hydroxybenzoate (4HB). Involved in the synthesis of glycosylated p-hydroxybenzoic acid methyl esters (p-HBADs) and phenolic glycolipids (PGL) that play important roles in the pathogenesis of mycobacterial infections. This Mycobacterium bovis (strain ATCC BAA-935 / AF2122/97) protein is Chorismate pyruvate-lyase.